Consider the following 232-residue polypeptide: DNA repair protein RecO (232 aa).

The protein belongs to the RecO family.

Functionally, involved in DNA repair and RecF pathway recombination. This Francisella tularensis subsp. novicida (strain U112) protein is DNA repair protein RecO.